Here is a 439-residue protein sequence, read N- to C-terminus: Methylenetetrahydrofolate--tRNA-(uracil-5-)-methyltransferase TrmFO (439 aa).

Gly-9–Gly-14 contributes to the FAD binding site.

This sequence belongs to the MnmG family. TrmFO subfamily. Requires FAD as cofactor.

It localises to the cytoplasm. It carries out the reaction uridine(54) in tRNA + (6R)-5,10-methylene-5,6,7,8-tetrahydrofolate + NADH + H(+) = 5-methyluridine(54) in tRNA + (6S)-5,6,7,8-tetrahydrofolate + NAD(+). The enzyme catalyses uridine(54) in tRNA + (6R)-5,10-methylene-5,6,7,8-tetrahydrofolate + NADPH + H(+) = 5-methyluridine(54) in tRNA + (6S)-5,6,7,8-tetrahydrofolate + NADP(+). In terms of biological role, catalyzes the folate-dependent formation of 5-methyl-uridine at position 54 (M-5-U54) in all tRNAs. This chain is Methylenetetrahydrofolate--tRNA-(uracil-5-)-methyltransferase TrmFO, found in Desulforudis audaxviator (strain MP104C).